The primary structure comprises 256 residues: Dioxygenase lolE1 (256 aa).

Residues His-125, Asp-127, and His-203 each coordinate Fe cation.

The protein belongs to the PhyH family. As to quaternary structure, homodimer. It depends on Fe cation as a cofactor.

It participates in alkaloid biosynthesis. Dioxygenase; part of the gene cluster that mediates the biosynthesis of loline alkaloids, potent insecticidal agents composed of a pyrrolizidine ring system and an uncommon ether bridge linking carbons 2 and 7. Lolines are structurally differentiated by the various modifications of the L-amino group and include norloline, loline, N-methylloline, N-acetylloline, N-acetylnorloline, and N-formylloline. The first committed step is the condensation of O-acetyl-L-homoserine (derived from L-aspartic acid) and L-proline, probably catalyzed by the gamma-type pyridoxal 5'-phosphate(PLP)-dependent enzyme lolC, to give the diamino diacid, NACPP. Ensuing cyclization, decarboxylation, and acetylation steps yield 1-exo-acetamidopyrrolizidine (AcAP). LolO is required for installation of the ether bridge upon the pathway intermediate, 1-exo-acetamidopyrrolizidine (AcAP). In sequential 2-oxoglutarate- and O(2)-consuming steps, lolO removes hydrogens from C2 and C7 of AcAP to form both carbon-oxygen bonds in N-acetylnorloline (NANL), the precursor to all other lolines. The enzymes lolD, lolE, lolF and lolT have also been proposed to be involved in the ether-bridge installation. Further processing of the exocyclic moiety of NANL by fungal N-acetamidase (LolN), methyltransferase (LolM), and cytochrome P450 (LolP) enzymes, with occasional involvement of a plant acetyltransferase, generates the other known lolines. LolN transforms NANL to norlonine which is monomethylated and dimethylated to respectively lonine and N-methyllonine (NML) by lolM. LolP catalyzes hydroxylation of the methyl group in N-methylloline (NML) and further oxygenation to N-formylloline (NFL). A plant acetyltransferase is responsible for the acetylation of loline to form N-acetylloline (NAL). LolA might interact with aspartate kinase to prevent feedback inhibition of its activity by these end products and thereby promote production of L-homoserine from L-aspartate. The polypeptide is Dioxygenase lolE1 (Epichloe uncinata (Endophyte fungus)).